A 48-amino-acid chain; its full sequence is uncharacterized protein (48 aa).

This is an uncharacterized protein from His1 virus (isolate Australia/Victoria) (His1V).